Here is a 507-residue protein sequence, read N- to C-terminus: Proline--tRNA ligase (507 aa).

It belongs to the class-II aminoacyl-tRNA synthetase family. ProS type 3 subfamily. Homodimer.

Its subcellular location is the cytoplasm. The enzyme catalyses tRNA(Pro) + L-proline + ATP = L-prolyl-tRNA(Pro) + AMP + diphosphate. Functionally, catalyzes the attachment of proline to tRNA(Pro) in a two-step reaction: proline is first activated by ATP to form Pro-AMP and then transferred to the acceptor end of tRNA(Pro). The polypeptide is Proline--tRNA ligase (Protochlamydia amoebophila (strain UWE25)).